The following is a 353-amino-acid chain: Ribosomal RNA large subunit methyltransferase M (353 aa).

S-adenosyl-L-methionine contacts are provided by residues Ser-179, 212–215 (APGG), Asp-231, Asp-251, and Asp-267. Residue Lys-296 is the Proton acceptor of the active site.

It belongs to the class I-like SAM-binding methyltransferase superfamily. RNA methyltransferase RlmE family. RlmM subfamily. As to quaternary structure, monomer.

It is found in the cytoplasm. The catalysed reaction is cytidine(2498) in 23S rRNA + S-adenosyl-L-methionine = 2'-O-methylcytidine(2498) in 23S rRNA + S-adenosyl-L-homocysteine + H(+). Functionally, catalyzes the 2'-O-methylation at nucleotide C2498 in 23S rRNA. This Laribacter hongkongensis (strain HLHK9) protein is Ribosomal RNA large subunit methyltransferase M.